A 554-amino-acid polypeptide reads, in one-letter code: Hydroxylamine reductase (554 aa).

Residues cysteine 3, cysteine 6, cysteine 18, and cysteine 25 each coordinate [2Fe-2S] cluster. Residues histidine 252, glutamate 276, cysteine 320, cysteine 408, cysteine 436, cysteine 461, glutamate 495, and lysine 497 each contribute to the hybrid [4Fe-2O-2S] cluster site. The residue at position 408 (cysteine 408) is a Cysteine persulfide.

Belongs to the HCP family. [2Fe-2S] cluster is required as a cofactor. Hybrid [4Fe-2O-2S] cluster serves as cofactor.

It is found in the cytoplasm. The enzyme catalyses A + NH4(+) + H2O = hydroxylamine + AH2 + H(+). In terms of biological role, catalyzes the reduction of hydroxylamine to form NH(3) and H(2)O. This is Hydroxylamine reductase from Shewanella pealeana (strain ATCC 700345 / ANG-SQ1).